A 458-amino-acid polypeptide reads, in one-letter code: ATP synthase subunit beta (458 aa).

148-155 (GGAGVGKT) serves as a coordination point for ATP.

It belongs to the ATPase alpha/beta chains family. As to quaternary structure, F-type ATPases have 2 components, CF(1) - the catalytic core - and CF(0) - the membrane proton channel. CF(1) has five subunits: alpha(3), beta(3), gamma(1), delta(1), epsilon(1). CF(0) has three main subunits: a(1), b(2) and c(9-12). The alpha and beta chains form an alternating ring which encloses part of the gamma chain. CF(1) is attached to CF(0) by a central stalk formed by the gamma and epsilon chains, while a peripheral stalk is formed by the delta and b chains.

The protein resides in the cell inner membrane. It carries out the reaction ATP + H2O + 4 H(+)(in) = ADP + phosphate + 5 H(+)(out). In terms of biological role, produces ATP from ADP in the presence of a proton gradient across the membrane. The catalytic sites are hosted primarily by the beta subunits. The sequence is that of ATP synthase subunit beta from Shewanella woodyi (strain ATCC 51908 / MS32).